A 365-amino-acid polypeptide reads, in one-letter code: MQTLKVDLGERSYPIYIGEGLLDQPELLAPHIAGRQVAIVSNETVAPLYLERLSKALGAYSVLPVVLPDGEAHKNWETLQLIFDGLLTARHDRRTTVVALGGGVIGDMAGFAAACYQRGVDFIQVPTTLLSQVDSSVGGKTGINHPLGKNMVGAFYQPNAVLIDTTSLKTLPARELSAGLAEVIKYGLICDKPFLAWLEDNMQALRALDSAALTEAIRRSCAAKAAVVGADERESGVRATLNLGHTFGHAIETHMGYGVWLHGEAVAAGTVMALEMSMRLGWIDQAERDRGIRLLQDAGLPVVPPQEMTPAHFMEHMAVDKKVLDGRLRLVLLRQMGEAVVTDDYSKEILQATLSADYRAIVAQL.

NAD(+) is bound by residues 69–74, 103–107, 127–128, Lys140, and Lys149; these read DGEAHK, GVIGD, and TT. Zn(2+)-binding residues include Glu182, His245, and His262.

Belongs to the sugar phosphate cyclases superfamily. Dehydroquinate synthase family. Co(2+) is required as a cofactor. Zn(2+) serves as cofactor. Requires NAD(+) as cofactor.

Its subcellular location is the cytoplasm. It carries out the reaction 7-phospho-2-dehydro-3-deoxy-D-arabino-heptonate = 3-dehydroquinate + phosphate. It functions in the pathway metabolic intermediate biosynthesis; chorismate biosynthesis; chorismate from D-erythrose 4-phosphate and phosphoenolpyruvate: step 2/7. Functionally, catalyzes the conversion of 3-deoxy-D-arabino-heptulosonate 7-phosphate (DAHP) to dehydroquinate (DHQ). This Pseudomonas putida (strain ATCC 700007 / DSM 6899 / JCM 31910 / BCRC 17059 / LMG 24140 / F1) protein is 3-dehydroquinate synthase.